We begin with the raw amino-acid sequence, 365 residues long: Carbamoyl phosphate synthase small chain (365 aa).

CPSase regions lie at residues 1-166 (MKRQ…PSPG) and 1-169 (MKRQ…GRGH). 3 residues coordinate L-glutamine: Ser45, Gly218, and Gly220. Residues 170–357 (RVVLVDFGMK…LTMIENFKKE (188 aa)) enclose the Glutamine amidotransferase type-1 domain. The Nucleophile role is filled by Cys245. The L-glutamine site is built by Leu246, Gln249, Asn287, Gly289, and Tyr290. Catalysis depends on residues His330 and Glu332.

It belongs to the CarA family. In terms of assembly, composed of two chains; the small (or glutamine) chain promotes the hydrolysis of glutamine to ammonia, which is used by the large (or ammonia) chain to synthesize carbamoyl phosphate. Tetramer of heterodimers (alpha,beta)4.

The catalysed reaction is hydrogencarbonate + L-glutamine + 2 ATP + H2O = carbamoyl phosphate + L-glutamate + 2 ADP + phosphate + 2 H(+). It catalyses the reaction L-glutamine + H2O = L-glutamate + NH4(+). The protein operates within amino-acid biosynthesis; L-arginine biosynthesis; carbamoyl phosphate from bicarbonate: step 1/1. Its pathway is pyrimidine metabolism; UMP biosynthesis via de novo pathway; (S)-dihydroorotate from bicarbonate: step 1/3. Functionally, small subunit of the glutamine-dependent carbamoyl phosphate synthetase (CPSase). CPSase catalyzes the formation of carbamoyl phosphate from the ammonia moiety of glutamine, carbonate, and phosphate donated by ATP, constituting the first step of 2 biosynthetic pathways, one leading to arginine and/or urea and the other to pyrimidine nucleotides. The small subunit (glutamine amidotransferase) binds and cleaves glutamine to supply the large subunit with the substrate ammonia. This chain is Carbamoyl phosphate synthase small chain, found in Bacillus anthracis.